A 299-amino-acid chain; its full sequence is tRNA dimethylallyltransferase (299 aa).

13–20 (GATASGKT) contributes to the ATP binding site. 15–20 (TASGKT) contributes to the substrate binding site. Positions 38-41 (DSRQ) are interaction with substrate tRNA.

Belongs to the IPP transferase family. In terms of assembly, monomer. Requires Mg(2+) as cofactor.

It catalyses the reaction adenosine(37) in tRNA + dimethylallyl diphosphate = N(6)-dimethylallyladenosine(37) in tRNA + diphosphate. In terms of biological role, catalyzes the transfer of a dimethylallyl group onto the adenine at position 37 in tRNAs that read codons beginning with uridine, leading to the formation of N6-(dimethylallyl)adenosine (i(6)A). The polypeptide is tRNA dimethylallyltransferase (Prochlorococcus marinus (strain MIT 9312)).